We begin with the raw amino-acid sequence, 285 residues long: Acetyl-coenzyme A carboxylase carboxyl transferase subunit beta (285 aa).

The CoA carboxyltransferase N-terminal domain maps to 22-285 (LWTKCEACGA…HPGVAYAPGV (264 aa)). Positions 26, 29, 45, and 48 each coordinate Zn(2+). The C4-type zinc finger occupies 26-48 (CEACGAQIYKKEFQENLHVCPKC).

Belongs to the AccD/PCCB family. In terms of assembly, acetyl-CoA carboxylase is a heterohexamer composed of biotin carboxyl carrier protein (AccB), biotin carboxylase (AccC) and two subunits each of ACCase subunit alpha (AccA) and ACCase subunit beta (AccD). The cofactor is Zn(2+).

It is found in the cytoplasm. It catalyses the reaction N(6)-carboxybiotinyl-L-lysyl-[protein] + acetyl-CoA = N(6)-biotinyl-L-lysyl-[protein] + malonyl-CoA. It functions in the pathway lipid metabolism; malonyl-CoA biosynthesis; malonyl-CoA from acetyl-CoA: step 1/1. Functionally, component of the acetyl coenzyme A carboxylase (ACC) complex. Biotin carboxylase (BC) catalyzes the carboxylation of biotin on its carrier protein (BCCP) and then the CO(2) group is transferred by the transcarboxylase to acetyl-CoA to form malonyl-CoA. The protein is Acetyl-coenzyme A carboxylase carboxyl transferase subunit beta of Thermus thermophilus (strain ATCC 27634 / DSM 579 / HB8).